A 155-amino-acid chain; its full sequence is Photosystem I reaction center subunit XI (155 aa).

2 helical membrane passes run 80–102 (LISGIALILVATACLAAYGLVSF) and 117–139 (GWSQFTAGFFVGAMGSAFVAFFL).

This sequence belongs to the PsaL family.

The protein resides in the cellular thylakoid membrane. The sequence is that of Photosystem I reaction center subunit XI from Thermosynechococcus vestitus (strain NIES-2133 / IAM M-273 / BP-1).